Here is a 149-residue protein sequence, read N- to C-terminus: Chromophore lyase CpcS/CpeS homolog (149 aa).

This sequence belongs to the CpcS/CpeS biliprotein lyase family.

Its subcellular location is the plastid. The protein resides in the chloroplast. In terms of biological role, might function to covalently attach a chromophore to Cys residue(s) of phycobiliproteins. This is Chromophore lyase CpcS/CpeS homolog from Pyropia yezoensis (Susabi-nori).